Reading from the N-terminus, the 335-residue chain is MALPLDFEKPLFELETKIDELRTFSQEKDLDFSSEIATLEQKAEELRKKIYRDLTPWQQAQLARHPDRPNTIEYIRLLFEEFYEMKGDRLYGDDPAIVGGIARFQGRPVTVIGHVKGKDTKENIYRNFGMPHPEGYRKALRLMRQAAKFSRPIICFIDTPGAYCGIGAEERGQAEAIARNLLEMAALPVPIISVIIGEGGSGGALALGVADRLLMLEHAVYSVASPESAASILFKDASLAPQAAAAMGITAERLKDLKLIDRIVPEPSGGAHRNPIGTAKELATALSEEIENLLALSAQELVDSRYAKYRNLGLHCIEDASCGTFEAEATDASGT.

Positions 38–292 constitute a CoA carboxyltransferase C-terminal domain; it reads TLEQKAEELR…ATALSEEIEN (255 aa).

Belongs to the AccA family. Acetyl-CoA carboxylase is a heterohexamer composed of biotin carboxyl carrier protein (AccB), biotin carboxylase (AccC) and two subunits each of ACCase subunit alpha (AccA) and ACCase subunit beta (AccD).

The protein localises to the cytoplasm. It catalyses the reaction N(6)-carboxybiotinyl-L-lysyl-[protein] + acetyl-CoA = N(6)-biotinyl-L-lysyl-[protein] + malonyl-CoA. The protein operates within lipid metabolism; malonyl-CoA biosynthesis; malonyl-CoA from acetyl-CoA: step 1/1. In terms of biological role, component of the acetyl coenzyme A carboxylase (ACC) complex. First, biotin carboxylase catalyzes the carboxylation of biotin on its carrier protein (BCCP) and then the CO(2) group is transferred by the carboxyltransferase to acetyl-CoA to form malonyl-CoA. This Heliobacterium modesticaldum (strain ATCC 51547 / Ice1) protein is Acetyl-coenzyme A carboxylase carboxyl transferase subunit alpha.